We begin with the raw amino-acid sequence, 190 residues long: Elongation factor P (190 aa).

Lys34 carries the post-translational modification N6-(3,6-diaminohexanoyl)-5-hydroxylysine.

Belongs to the elongation factor P family. In terms of processing, may be beta-lysylated on the epsilon-amino group of Lys-34 by the combined action of EpmA and EpmB, and then hydroxylated on the C5 position of the same residue by EpmC (if this protein is present). Lysylation is critical for the stimulatory effect of EF-P on peptide-bond formation. The lysylation moiety may extend toward the peptidyltransferase center and stabilize the terminal 3-CCA end of the tRNA. Hydroxylation of the C5 position on Lys-34 may allow additional potential stabilizing hydrogen-bond interactions with the P-tRNA.

The protein resides in the cytoplasm. It functions in the pathway protein biosynthesis; polypeptide chain elongation. Functionally, involved in peptide bond synthesis. Alleviates ribosome stalling that occurs when 3 or more consecutive Pro residues or the sequence PPG is present in a protein, possibly by augmenting the peptidyl transferase activity of the ribosome. Modification of Lys-34 is required for alleviation. The chain is Elongation factor P from Psychrobacter cryohalolentis (strain ATCC BAA-1226 / DSM 17306 / VKM B-2378 / K5).